The chain runs to 728 residues: MEETQPPPQPKLPLCDSLMIWLQTFNTASPCQDVKQLTSGVAMAQVLHQIDAAWFNESWLSRIKEDVGDNWRIKASNVKKVLQGIMSYYHEFLGQQISEALIPDLNQITECSDPVELGRLLQLILGCAINCEKKQEHIQNIMTLEESVQHVVMTAIQELMSKEILSSPPNDAVGELEQQLKRALEELQEALAEKEELRQRCEELDMQVTTLQDEKNSLVSENEMMNEKLDQLDGSFDDPNTVVAKKYFHAQLQLEQLQEENFRLEAAKDDYRVHCEELEKQLIEFQHRNDELTSLAEETRALKDEIDVLRATSDKANKLESTVEIYRQKLQDLNDLRKQVKTLQETNMMYMHNTVSLEEELKKANAARTQLETYKRQVQDLHVKLSSESKRADTLAFEMKRLEEKHEALLKEKERLIEQRDTLKETNEELRCSQVQQDHLNQTDASATKSYENLAAEIMPVEYREVFIRLQHENKMLRLQQEGSENERIEELQEQLEQKHRKMNELETEQRLSKERIRELQQQIEDLQKSLQEQGSKSEGESSSKLKQKLEAHMEKLTEVHEELQKKQELIEDLQPDINQNVQKINELEAALQKKDEDMKAMEERYKMYLEKARNVIKTLDPKLNPASAEIMLLRKQLAEKERRIEILESECKVAKFRDYEEKLIVSAWYNKSLAFQKLGMESRLVSGGGACSDTGACTPARSFLAQQRHITNTRRNLSVKVPATTSD.

At M1 the chain carries N-acetylmethionine. A sufficient for interaction with microtubules region spans residues 1–555; sequence MEETQPPPQP…LKQKLEAHME (555 aa). Residues 12–128 form the Calponin-homology (CH) domain; the sequence is LPLCDSLMIW…RLLQLILGCA (117 aa). Coiled-coil stretches lie at residues 169–434 and 477–658; these read PNDA…RCSQ and LRLQ…AKFR. The interval 169–444 is sufficient for homodimerization, interaction wit HOOK2, HOOK3 and AP4M1; the sequence is PNDAVGELEQ…VQQDHLNQTD (276 aa). Phosphoserine is present on S235. Positions 481 to 512 are disordered; that stretch reads QEGSENERIEELQEQLEQKHRKMNELETEQRL. Basic and acidic residues predominate over residues 503 to 512; the sequence is MNELETEQRL. The sufficient for interaction with AKTIP and VPS18 stretch occupies residues 657–728; that stretch reads FRDYEEKLIV…SVKVPATTSD (72 aa). A Phosphothreonine modification is found at T699. S719 and S727 each carry phosphoserine.

Belongs to the hook family. As to quaternary structure, self-associates. Component of the FTS/Hook/FHIP complex (FHF complex), composed of AKTIP/FTS, FHIP1B, and one or more members of the Hook family of proteins HOOK1, HOOK2, and HOOK3. Interacts directly with AKTIP/FTS, HOOK2 and HOOK3. Associates with several subunits of the homotypic vesicular sorting complex (the HOPS complex) including VPS16, VPS18, VPS39 and VPS41; these interactions may be indirect. Interacts with CCDC181. Interacts (via coiled-coil region) with RIMBP3 (via C-terminus). Interacts with LRGUK (via guanylate kinase-like domain). Interacts with microtubules. May interact with CLN3. Interacts with AP4M1; the interaction is direct, mediates the interaction between FTS-Hook-FHIP (FHF) complex and AP-4 and the perinuclear distribution of AP-4.

It localises to the cytoplasm. Its subcellular location is the cytoskeleton. Functionally, component of the FTS/Hook/FHIP complex (FHF complex). The FHF complex may function to promote vesicle trafficking and/or fusion via the homotypic vesicular protein sorting complex (the HOPS complex). FHF complex promotes the distribution of AP-4 complex to the perinuclear area of the cell. Required for spermatid differentiation. Probably involved in the positioning of the microtubules of the manchette and the flagellum in relation to the membrane skeleton. This chain is Protein Hook homolog 1, found in Homo sapiens (Human).